A 249-amino-acid chain; its full sequence is NADH dehydrogenase [ubiquinone] flavoprotein 2, mitochondrial (249 aa).

The N-terminal 32 residues, 1–32, are a transit peptide targeting the mitochondrion; it reads MFFSAALRARAAGLTAHWGRHVRNLHKTAKQN. Residue Lys-61 is modified to N6-acetyllysine. The [2Fe-2S] cluster site is built by Cys-135, Cys-140, Cys-176, and Cys-180. Position 193 is a phosphotyrosine; by SRC (Tyr-193). A disordered region spans residues 213–249; it reads IPKPGPRSGRFSCEPAGGLTSLTEPPKGPGFGVQAGL.

The protein belongs to the complex I 24 kDa subunit family. As to quaternary structure, core subunit of respiratory chain NADH dehydrogenase (Complex I) which is composed of 45 different subunits. This is a component of the flavoprotein-sulfur (FP) fragment of the enzyme. The cofactor is [2Fe-2S] cluster.

It localises to the mitochondrion inner membrane. The enzyme catalyses a ubiquinone + NADH + 5 H(+)(in) = a ubiquinol + NAD(+) + 4 H(+)(out). Core subunit of the mitochondrial membrane respiratory chain NADH dehydrogenase (Complex I) which catalyzes electron transfer from NADH through the respiratory chain, using ubiquinone as an electron acceptor. Parts of the peripheral arm of the enzyme, where the electrons from NADH are accepted by flavin mononucleotide (FMN) and then passed along a chain of iron-sulfur clusters by electron tunnelling to the final acceptor ubiquinone. Contains one iron-sulfur cluster. This is NADH dehydrogenase [ubiquinone] flavoprotein 2, mitochondrial from Pan troglodytes (Chimpanzee).